A 266-amino-acid polypeptide reads, in one-letter code: Enterotoxin type C-1 (266 aa).

An N-terminal signal peptide occupies residues 1 to 27; sequence MNKSRFISCVILIFALILVLFTPNVLA. Cysteines 120 and 137 form a disulfide.

It belongs to the staphylococcal/streptococcal toxin family. Interacts with host MHC class II molecules composed of alpha/HLA-DRA and beta/HLA-DRB1 chains.

The protein resides in the secreted. In terms of biological role, staphylococcal enterotoxin that activates the host immune system by binding as unprocessed molecules to major histocompatibility (MHC) complex class II and T-cell receptor (TCR) molecules. In turn, this ternary complex activates a large number of T-lymphocytes initiating a systemic release of pro-inflammatory cytokines. Inhibits SEC1-mediated T-cell activation in the absence of MHC class II by competing with SEC1 for binding to the host TCR. Also causes the intoxication staphylococcal food poisoning syndrome. This is Enterotoxin type C-1 (entC1) from Staphylococcus aureus.